The primary structure comprises 511 residues: V-type proton ATPase subunit B, brain isoform (511 aa).

Position 400 (arginine 400) interacts with ATP.

Belongs to the ATPase alpha/beta chains family. In terms of assembly, V-ATPase is a heteromultimeric enzyme made up of two complexes: the ATP-hydrolytic V1 complex and the proton translocation V0 complex. The V1 complex consists of three catalytic AB heterodimers that form a heterohexamer, three peripheral stalks each consisting of EG heterodimers, one central rotor including subunits D and F, and the regulatory subunits C and H. The proton translocation complex V0 consists of the proton transport subunit a, a ring of proteolipid subunits c9c'', rotary subunit d, subunits e and f, and the accessory subunits ATP6AP1/Ac45 and ATP6AP2/PRR.

It is found in the apical cell membrane. The protein localises to the melanosome. It localises to the cytoplasm. The protein resides in the cytoplasmic vesicle. Its subcellular location is the secretory vesicle. It is found in the synaptic vesicle membrane. The protein localises to the clathrin-coated vesicle membrane. Its function is as follows. Non-catalytic subunit of the V1 complex of vacuolar(H+)-ATPase (V-ATPase), a multisubunit enzyme composed of a peripheral complex (V1) that hydrolyzes ATP and a membrane integral complex (V0) that translocates protons. V-ATPase is responsible for acidifying and maintaining the pH of intracellular compartments and in some cell types, is targeted to the plasma membrane, where it is responsible for acidifying the extracellular environment. In renal intercalated cells, can partially compensate the lack of ATP6V1B1 and mediate secretion of protons (H+) into the urine under base-line conditions but not in conditions of acid load. This Pongo abelii (Sumatran orangutan) protein is V-type proton ATPase subunit B, brain isoform (ATP6V1B2).